The following is a 254-amino-acid chain: Hemin import ATP-binding protein HmuV (254 aa).

Positions 2–239 (LNINQVNINL…DTLSQVWHYD (238 aa)) constitute an ABC transporter domain. 34-41 (GPNGAGKS) provides a ligand contact to ATP.

Belongs to the ABC transporter superfamily. Heme (hemin) importer (TC 3.A.1.14.5) family. In terms of assembly, the complex is composed of two ATP-binding proteins (HmuV), two transmembrane proteins (HmuU) and a solute-binding protein (HmuT).

The protein resides in the cell inner membrane. Part of the ABC transporter complex HmuTUV involved in hemin import. Responsible for energy coupling to the transport system. The polypeptide is Hemin import ATP-binding protein HmuV (Shewanella denitrificans (strain OS217 / ATCC BAA-1090 / DSM 15013)).